Reading from the N-terminus, the 172-residue chain is Type VI secretion system sheath protein TssB1 (172 aa).

As to quaternary structure, forms a heterodimer with TssC1. Heterodimers assemble to form the sheath of the T6SS machinery. Interacts with TagJ. Interacts with TssA1.

Functionally, core component of the H1 type VI (H1-T6SS) secretion system that plays a role in the release of toxins targeting both eukaryotic and prokaryotic species. Forms the sheath of the structure by assembling into tubules together with TssC1 resulting in the stacking of cogwheel-like structures showing predominantly a 12-fold symmetry. The sheath contracts to provide the energy needed for effector delivery. The protein is Type VI secretion system sheath protein TssB1 of Pseudomonas aeruginosa (strain ATCC 15692 / DSM 22644 / CIP 104116 / JCM 14847 / LMG 12228 / 1C / PRS 101 / PAO1).